A 1220-amino-acid polypeptide reads, in one-letter code: DNA-directed RNA polymerase subunit beta (1220 aa).

The protein belongs to the RNA polymerase beta chain family. In terms of assembly, the RNAP catalytic core consists of 2 alpha, 1 beta, 1 beta' and 1 omega subunit. When a sigma factor is associated with the core the holoenzyme is formed, which can initiate transcription.

It catalyses the reaction RNA(n) + a ribonucleoside 5'-triphosphate = RNA(n+1) + diphosphate. DNA-dependent RNA polymerase catalyzes the transcription of DNA into RNA using the four ribonucleoside triphosphates as substrates. In Mesomycoplasma hyopneumoniae (strain 232) (Mycoplasma hyopneumoniae), this protein is DNA-directed RNA polymerase subunit beta.